The sequence spans 135 residues: Transcription antitermination protein NusB (135 aa).

The protein belongs to the NusB family.

Involved in transcription antitermination. Required for transcription of ribosomal RNA (rRNA) genes. Binds specifically to the boxA antiterminator sequence of the ribosomal RNA (rrn) operons. This chain is Transcription antitermination protein NusB, found in Lacticaseibacillus paracasei (strain ATCC 334 / BCRC 17002 / CCUG 31169 / CIP 107868 / KCTC 3260 / NRRL B-441) (Lactobacillus paracasei).